A 264-amino-acid chain; its full sequence is Galectin-3 (264 aa).

The disordered stretch occupies residues 1 to 105 (MADSFSLNDA…GAFPGQPGAP (105 aa)). Ala2 bears the N-acetylalanine mark. Ser6 bears the Phosphoserine; by CK1 mark. A run of 8 repeats spans residues 35–43 (YPGAAYPGA), 44–52 (YPGQAPPGA), 53–61 (YPGQAPPGA), 62–70 (YPGQAPPSA), 71–79 (YPGPTAPGA), 80–88 (YPGPTAPGA), 89–97 (YPGQPAPGA), and 98–107 (FPGQPGAPGA). The interval 35 to 114 (YPGAAYPGAY…PGAYPQCSGG (80 aa)) is 9 X 9 AA tandem repeats of Y-P-G-X(3)-P-[GS]-A. The span at 37-46 (GAAYPGAYPG) shows a compositional bias: low complexity. Over residues 47 to 75 (QAPPGAYPGQAPPGAYPGQAPPSAYPGPT) the composition is skewed to pro residues. The span at 76 to 105 (APGAYPGPTAPGAYPGQPAPGAFPGQPGAP) shows a compositional bias: low complexity. A 9; truncated repeat occupies 108 to 114 (YPQCSGG). The Galectin domain maps to 132–262 (YDLPLPGGVM…DITLTSANHA (131 aa)). Position 195-201 (195-201 (WGKEERQ)) interacts with a beta-D-galactoside. Ser202 is modified (phosphoserine). The short motif at 240-255 (KNLREISQLGISGDIT) is the Nuclear export signal element.

Probably forms homo- or heterodimers. Interacts with DMBT1. Interacts with CD6 and ALCAM. Forms a complex with the ITGA3, ITGB1 and CSPG4. Interacts with LGALS3BP, LYPD3, ZFTRAF1 and UACA. Interacts with TRIM16; this interaction mediates autophagy of damage endomembranes. Interacts with and inhibits by binding NCR3/NKp30. As to expression, the highest levels are found in activated macrophages.

It is found in the cytoplasm. Its subcellular location is the nucleus. The protein localises to the secreted. In terms of biological role, galactose-specific lectin which binds IgE. May mediate with the alpha-3, beta-1 integrin the stimulation by CSPG4 of endothelial cells migration. Together with DMBT1, required for terminal differentiation of columnar epithelial cells during early embryogenesis. In the nucleus: acts as a pre-mRNA splicing factor. Involved in acute inflammatory responses including neutrophil activation and adhesion, chemoattraction of monocytes macrophages, opsonization of apoptotic neutrophils, and activation of mast cells. Together with TRIM16, coordinates the recognition of membrane damage with mobilization of the core autophagy regulators ATG16L1 and BECN1 in response to damaged endomembranes. When secreted, interacts with NK cell-activating receptor NCR3/NKp30 acting as an inhibitory ligand which antagonizes NK cell attack. The protein is Galectin-3 (Lgals3) of Mus musculus (Mouse).